Reading from the N-terminus, the 187-residue chain is UPF0301 protein PBPRA3139 (187 aa).

The protein belongs to the UPF0301 (AlgH) family.

The sequence is that of UPF0301 protein PBPRA3139 from Photobacterium profundum (strain SS9).